The chain runs to 474 residues: 3-isopropylmalate dehydratase large subunit (474 aa).

[4Fe-4S] cluster-binding residues include C355, C415, and C418.

Belongs to the aconitase/IPM isomerase family. LeuC type 1 subfamily. Heterodimer of LeuC and LeuD. [4Fe-4S] cluster serves as cofactor.

The catalysed reaction is (2R,3S)-3-isopropylmalate = (2S)-2-isopropylmalate. Its pathway is amino-acid biosynthesis; L-leucine biosynthesis; L-leucine from 3-methyl-2-oxobutanoate: step 2/4. Its function is as follows. Catalyzes the isomerization between 2-isopropylmalate and 3-isopropylmalate, via the formation of 2-isopropylmaleate. This chain is 3-isopropylmalate dehydratase large subunit, found in Shewanella sp. (strain W3-18-1).